The sequence spans 518 residues: 3-phosphoshikimate 1-carboxyvinyltransferase 1, chloroplastic (518 aa).

The transit peptide at 1-74 (MAQISSMGQG…RISASVVTAQ (74 aa)) directs the protein to the chloroplast. Positions 97, 98, and 102 each coordinate 3-phosphoshikimate. Residue Lys97 participates in phosphoenolpyruvate binding. Positions 175 and 205 each coordinate phosphoenolpyruvate. 3-phosphoshikimate contacts are provided by Ser252, Ser253, Gln254, Ser280, Asp405, and Lys432. Residue Gln254 participates in phosphoenolpyruvate binding. Residue Asp405 is the Proton acceptor of the active site. 3 residues coordinate phosphoenolpyruvate: Arg436, Arg478, and Lys503.

It belongs to the EPSP synthase family.

It is found in the plastid. The protein resides in the chloroplast. The catalysed reaction is 3-phosphoshikimate + phosphoenolpyruvate = 5-O-(1-carboxyvinyl)-3-phosphoshikimate + phosphate. It functions in the pathway metabolic intermediate biosynthesis; chorismate biosynthesis; chorismate from D-erythrose 4-phosphate and phosphoenolpyruvate: step 6/7. In terms of biological role, catalyzes the transfer of the enolpyruvyl moiety of phosphoenolpyruvate (PEP) to the 5-hydroxyl of shikimate-3-phosphate (S3P) to produce enolpyruvyl shikimate-3-phosphate and inorganic phosphate. The sequence is that of 3-phosphoshikimate 1-carboxyvinyltransferase 1, chloroplastic (EPSPS-1) from Nicotiana tabacum (Common tobacco).